The following is a 159-amino-acid chain: Endoribonuclease YbeY (159 aa).

3 residues coordinate Zn(2+): H125, H129, and H135.

It belongs to the endoribonuclease YbeY family. Zn(2+) serves as cofactor.

The protein localises to the cytoplasm. Functionally, single strand-specific metallo-endoribonuclease involved in late-stage 70S ribosome quality control and in maturation of the 3' terminus of the 16S rRNA. The sequence is that of Endoribonuclease YbeY from Brevibacillus brevis (strain 47 / JCM 6285 / NBRC 100599).